The sequence spans 549 residues: Ribosomal protein S6 kinase-like 1 (549 aa).

Residues I87–N115 form the MIT domain. Residues S145–F539 enclose the Protein kinase domain. ATP contacts are provided by residues R151–I159 and K177. Residues L260–H325 are disordered. D412 acts as the Proton acceptor in catalysis.

This sequence belongs to the protein kinase superfamily. Ser/Thr protein kinase family. S6 kinase subfamily.

It catalyses the reaction L-seryl-[protein] + ATP = O-phospho-L-seryl-[protein] + ADP + H(+). The enzyme catalyses L-threonyl-[protein] + ATP = O-phospho-L-threonyl-[protein] + ADP + H(+). This chain is Ribosomal protein S6 kinase-like 1 (RPS6KL1), found in Pongo abelii (Sumatran orangutan).